Here is an 870-residue protein sequence, read N- to C-terminus: Leucine--tRNA ligase (870 aa).

Positions 42-52 match the 'HIGH' region motif; the sequence is PYPSGKLHMGH. The 'KMSKS' region motif lies at 629-633; that stretch reads KMSKS. Residue Lys632 participates in ATP binding.

Belongs to the class-I aminoacyl-tRNA synthetase family.

It localises to the cytoplasm. It carries out the reaction tRNA(Leu) + L-leucine + ATP = L-leucyl-tRNA(Leu) + AMP + diphosphate. In Azotobacter vinelandii (strain DJ / ATCC BAA-1303), this protein is Leucine--tRNA ligase.